The following is a 43-amino-acid chain: Photosystem I reaction center subunit IX (43 aa).

The chain crosses the membrane as a helical span at residues 7–27; it reads YLSVAPVLSTLWFGSLAGLLI.

The protein belongs to the PsaJ family.

Its subcellular location is the plastid. The protein resides in the chloroplast thylakoid membrane. May help in the organization of the PsaE and PsaF subunits. This is Photosystem I reaction center subunit IX from Aethionema cordifolium (Lebanon stonecress).